We begin with the raw amino-acid sequence, 88 residues long: UPF0367 protein syc2447_c (88 aa).

It belongs to the UPF0367 family.

The polypeptide is UPF0367 protein syc2447_c (Synechococcus sp. (strain ATCC 27144 / PCC 6301 / SAUG 1402/1) (Anacystis nidulans)).